A 62-amino-acid polypeptide reads, in one-letter code: Large ribosomal subunit protein uL29 (62 aa).

Belongs to the universal ribosomal protein uL29 family.

The protein is Large ribosomal subunit protein uL29 of Desulfatibacillum aliphaticivorans.